Reading from the N-terminus, the 153-residue chain is MKRKKSREMTMQLLFEMMIKKENYVEIINTLKEALTEEEDINSILGEKKEMDEERIDLDEVDLEYLIHTLKGVEENSKVLDEHIEKYLKNWTLNRLAKVDLAILRLCSYEILFSNEVPDNVAINEGVELAKKYGDDKSPAFINAVLDKIAKQM.

Belongs to the NusB family.

In terms of biological role, involved in transcription antitermination. Required for transcription of ribosomal RNA (rRNA) genes. Binds specifically to the boxA antiterminator sequence of the ribosomal RNA (rrn) operons. In Clostridium tetani (strain Massachusetts / E88), this protein is Transcription antitermination protein NusB.